The primary structure comprises 321 residues: Fimbria adhesin protein (321 aa).

The N-terminal stretch at 1–18 (MKKLTLFIGLMALGTTSA) is a signal peptide.

Belongs to the fimbrial protein family.

Its subcellular location is the fimbrium. This chain is Fimbria adhesin protein (mrkD), found in Klebsiella pneumoniae.